The following is a 1662-amino-acid chain: ABC transporter A family member 5 (1662 aa).

7 consecutive transmembrane segments (helical) span residues 30–50, 242–262, 284–304, 317–337, 346–366, 377–397, and 417–437; these read IVFPIIIVLLVFAILVLVQLF, SVFVSAALLIFTFRLVTELVV, ISWIITSLVTALPIDLIIIVI, IIVIVTLILYLLTLQLLAFIF, FAGLLTFLTILLINICGIFIG, LLLCCIFSPIGIACSFYIMSI, and QIIGTFVFNIIFYTFLIWYLD. Residues 505-739 form the ABC transporter 1 domain; it reads ISIRNLRKEF…YGVGYLLTCS (235 aa). 541-548 lines the ATP pocket; it reads GPNGSGKS. The next 7 helical transmembrane spans lie at 872-892, 1052-1072, 1102-1122, 1130-1150, 1163-1183, 1201-1221, and 1246-1266; these read FKAFLLSLLLPLLVIIGSIIV, IVYFIVIMMAGFSLMAGSFAG, LWDYFFAFILLLITCIILAIV, FGLFFLSLVLFSLSIIPLSYL, GAITAIHFSIGVIMTIAMIIL, IIDIVFNILSPLYAFSRVIFI, and STPIIILSVHVVVWTIFILLI. Residues 1322–1557 enclose the ABC transporter 2 domain; it reads LQYKGLHKLF…FGAGYSVEVK (236 aa). 1360–1367 lines the ATP pocket; it reads GLNGAGKT.

It belongs to the ABC transporter superfamily. ABCA family.

The protein resides in the membrane. The polypeptide is ABC transporter A family member 5 (abcA5) (Dictyostelium discoideum (Social amoeba)).